The chain runs to 214 residues: MIVKNTEFIKSATRPAHYPEGHLPEIAFAGRSNVGKSSLVNVLVNRKNLVRTSSTPGRTQLINFFQVNDDFMLVDLPGYGYAKVPLAVKKEWRPMMETYLSKRRNLRGVVLILDIRRTPTEEDLQMLTWLRAFSVPPVIVITKCDKVSKNERARQSAIIMEKMHLKKEELNYFSALSREGKDAVWARIDALLEPTAAETPGIPEEPAPPGPVND.

The EngB-type G domain occupies 22–194 (HLPEIAFAGR…WARIDALLEP (173 aa)). Residues 30 to 37 (GRSNVGKS), 57 to 61 (GRTQL), 75 to 78 (DLPG), 142 to 145 (TKCD), and 173 to 175 (FSA) each bind GTP. The Mg(2+) site is built by S37 and T59. Positions 195–214 (TAAETPGIPEEPAPPGPVND) are disordered. Over residues 203–214 (PEEPAPPGPVND) the composition is skewed to pro residues.

Belongs to the TRAFAC class TrmE-Era-EngA-EngB-Septin-like GTPase superfamily. EngB GTPase family. The cofactor is Mg(2+).

Its function is as follows. Necessary for normal cell division and for the maintenance of normal septation. The sequence is that of Probable GTP-binding protein EngB from Geobacter sp. (strain M21).